The following is a 429-amino-acid chain: High mobility group nucleosome-binding domain-containing protein 5 (429 aa).

The interval 1-429 is disordered; the sequence is MPKRKAAGDA…GEKGEPVSTV (429 aa). Residue threonine 29 is modified to Phosphothreonine. Over residues 35 to 44 the composition is skewed to basic residues; sequence KRASTSRKTK. Lysine 64 participates in a covalent cross-link: Glycyl lysine isopeptide (Lys-Gly) (interchain with G-Cter in SUMO2). Serine 90 carries the post-translational modification Phosphoserine. Composition is skewed to basic and acidic residues over residues 92–101 and 109–124; these read METEEVKEQI and GGEK…KNDE. A Glycyl lysine isopeptide (Lys-Gly) (interchain with G-Cter in SUMO1); alternate cross-link involves residue lysine 98. Lysine 98 participates in a covalent cross-link: Glycyl lysine isopeptide (Lys-Gly) (interchain with G-Cter in SUMO2); alternate. A Glycyl lysine isopeptide (Lys-Gly) (interchain with G-Cter in SUMO2) cross-link involves residue lysine 121. Acidic residues predominate over residues 133–152; it reads EKDEDEKEHEDTGEEGEDGE. Positions 153 to 195 are enriched in basic and acidic residues; it reads REGGLKEKPDVAEIEDAKEAKDDEEKEDKEKEDDKGGDGKKEE. A compositionally biased stretch (acidic residues) spans 196-209; that stretch reads EKDDEGEAETEEEV. 2 stretches are compositionally biased toward basic and acidic residues: residues 210 to 387 and 413 to 429; these read KEQQ…NEDR and NKDF…VSTV.

This sequence belongs to the HMGN family. Expressed in trophoblast giant cells.

Its subcellular location is the nucleus. In terms of biological role, preferentially binds to euchromatin and modulates cellular transcription by counteracting linker histone-mediated chromatin compaction. This chain is High mobility group nucleosome-binding domain-containing protein 5, found in Rattus norvegicus (Rat).